The following is a 193-amino-acid chain: MSFELPALPYAKDALAPHISAETLEYHYGKHHQTYVTNLNNLIKGTAFEGKSLEEIVRTSEGGIFNNAAQVWNHTFYWNCLAPNAGGEPTGKLADAIAASFGSFAEFKAQFTDAAIKNFGSGWTWLVKSADGKLAIVSTSNAGTPLTTDATPLLTVDVWEHAYYIDYRNARPNYLEHFWALVNWEFVAKNLAA.

Residues H27, H74, D157, and H161 each coordinate Fe cation.

This sequence belongs to the iron/manganese superoxide dismutase family. In terms of assembly, homodimer. The cofactor is Fe cation.

The catalysed reaction is 2 superoxide + 2 H(+) = H2O2 + O2. Functionally, destroys superoxide anion radicals which are normally produced within the cells and which are toxic to biological systems. The chain is Superoxide dismutase [Fe] (sodB) from Salmonella typhimurium (strain LT2 / SGSC1412 / ATCC 700720).